A 404-amino-acid chain; its full sequence is Cysteine desulfurase IscS (404 aa).

Pyridoxal 5'-phosphate is bound by residues 75–76, Asn-155, Gln-183, and 203–205; these read AT and SGH. Residue Lys-206 is modified to N6-(pyridoxal phosphate)lysine. Thr-243 lines the pyridoxal 5'-phosphate pocket. Cys-328 (cysteine persulfide intermediate) is an active-site residue. Residue Cys-328 participates in [2Fe-2S] cluster binding.

The protein belongs to the class-V pyridoxal-phosphate-dependent aminotransferase family. NifS/IscS subfamily. As to quaternary structure, homodimer. Forms a heterotetramer with IscU, interacts with other sulfur acceptors. Pyridoxal 5'-phosphate serves as cofactor.

It is found in the cytoplasm. The catalysed reaction is (sulfur carrier)-H + L-cysteine = (sulfur carrier)-SH + L-alanine. Its pathway is cofactor biosynthesis; iron-sulfur cluster biosynthesis. Master enzyme that delivers sulfur to a number of partners involved in Fe-S cluster assembly, tRNA modification or cofactor biosynthesis. Catalyzes the removal of elemental sulfur atoms from cysteine to produce alanine. Functions as a sulfur delivery protein for Fe-S cluster synthesis onto IscU, an Fe-S scaffold assembly protein, as well as other S acceptor proteins. In Pectobacterium atrosepticum (strain SCRI 1043 / ATCC BAA-672) (Erwinia carotovora subsp. atroseptica), this protein is Cysteine desulfurase IscS.